The chain runs to 451 residues: Probable V-type proton ATPase subunit H 1 (451 aa).

This sequence belongs to the V-ATPase H subunit family. In terms of assembly, V-ATPase is a heteromultimeric enzyme made up of two complexes: the ATP-hydrolytic V1 complex and the proton translocation V0 complex. The V1 complex consists of three catalytic AB heterodimers that form a heterohexamer, three peripheral stalks each consisting of EG heterodimers, one central rotor including subunits D and F, and the regulatory subunits C and H. The proton translocation complex V0 consists of the proton transport subunit a, a ring of proteolipid subunits c9c'', rotary subunit d, subunits e and f, and the accessory subunits vah-19/Ac45 and vah-20/PRR.

Functionally, subunit of the V1 complex of vacuolar(H+)-ATPase (V-ATPase), a multisubunit enzyme composed of a peripheral complex (V1) that hydrolyzes ATP and a membrane integral complex (V0) that translocates protons. V-ATPase is responsible for acidifying and maintaining the pH of intracellular compartments and in some cell types, is targeted to the plasma membrane, where it is responsible for acidifying the extracellular environment. Subunit H is essential for V-ATPase activity, but not for the assembly of the complex. The polypeptide is Probable V-type proton ATPase subunit H 1 (Caenorhabditis elegans).